A 343-amino-acid polypeptide reads, in one-letter code: Uroporphyrinogen decarboxylase (343 aa).

Residues 23–27 (RQAGR), aspartate 73, tyrosine 149, threonine 204, and histidine 320 each bind substrate.

The protein belongs to the uroporphyrinogen decarboxylase family. In terms of assembly, homodimer.

It is found in the cytoplasm. It catalyses the reaction uroporphyrinogen III + 4 H(+) = coproporphyrinogen III + 4 CO2. The protein operates within porphyrin-containing compound metabolism; protoporphyrin-IX biosynthesis; coproporphyrinogen-III from 5-aminolevulinate: step 4/4. In terms of biological role, catalyzes the decarboxylation of four acetate groups of uroporphyrinogen-III to yield coproporphyrinogen-III. This chain is Uroporphyrinogen decarboxylase, found in Bradyrhizobium sp. (strain BTAi1 / ATCC BAA-1182).